The sequence spans 155 residues: D-aminoacyl-tRNA deacylase (155 aa).

Positions 147–148 match the Gly-cisPro motif, important for rejection of L-amino acids motif; that stretch reads GP.

Belongs to the DTD family. Homodimer.

The protein localises to the cytoplasm. It carries out the reaction glycyl-tRNA(Ala) + H2O = tRNA(Ala) + glycine + H(+). It catalyses the reaction a D-aminoacyl-tRNA + H2O = a tRNA + a D-alpha-amino acid + H(+). In terms of biological role, an aminoacyl-tRNA editing enzyme that deacylates mischarged D-aminoacyl-tRNAs. Also deacylates mischarged glycyl-tRNA(Ala), protecting cells against glycine mischarging by AlaRS. Acts via tRNA-based rather than protein-based catalysis; rejects L-amino acids rather than detecting D-amino acids in the active site. By recycling D-aminoacyl-tRNA to D-amino acids and free tRNA molecules, this enzyme counteracts the toxicity associated with the formation of D-aminoacyl-tRNA entities in vivo and helps enforce protein L-homochirality. In Corynebacterium urealyticum (strain ATCC 43042 / DSM 7109), this protein is D-aminoacyl-tRNA deacylase.